Reading from the N-terminus, the 233-residue chain is MAKLQRKRSKALGSSLEMSQIMDAGTNKIKRRIRDLERLLKKKKDILPSTVIIEKERNLQALRLELQNNELKNKIKANAKKYHMVRFFEKKKALRKYNRLLKKIKESGADDKDLQQKLRATKIELCYVINFPKTEKYIALYPNDTPSTDPKGVELTNLRREQFLKLVAERMDANTLNVSFEEILKGKKLDEDSIGLTLSPDKDHEDGSQVSPTQDRKELDQVVGEDEKDDFFE.

A coiled-coil region spans residues 26–109; that stretch reads TNKIKRRIRD…LLKKIKESGA (84 aa). The tract at residues 194–233 is disordered; sequence IGLTLSPDKDHEDGSQVSPTQDRKELDQVVGEDEKDDFFE. The segment covering 223–233 has biased composition (acidic residues); sequence VGEDEKDDFFE.

It belongs to the EFG1 family.

It localises to the nucleus. Its subcellular location is the nucleolus. Involved in rRNA processing. Required growth at elevated temperatures, resistance to hydroxyurea and for cell cycle progression. This chain is rRNA-processing protein EFG1 (EFG1), found in Saccharomyces cerevisiae (strain YJM789) (Baker's yeast).